The primary structure comprises 127 residues: Aspartate 1-decarboxylase (127 aa).

Serine 25 serves as the catalytic Schiff-base intermediate with substrate; via pyruvic acid. Residue serine 25 is modified to Pyruvic acid (Ser). Substrate is bound at residue threonine 57. Tyrosine 58 serves as the catalytic Proton donor. Residue 73–75 (GAA) participates in substrate binding.

This sequence belongs to the PanD family. As to quaternary structure, heterooctamer of four alpha and four beta subunits. Requires pyruvate as cofactor. Is synthesized initially as an inactive proenzyme, which is activated by self-cleavage at a specific serine bond to produce a beta-subunit with a hydroxyl group at its C-terminus and an alpha-subunit with a pyruvoyl group at its N-terminus.

It localises to the cytoplasm. The catalysed reaction is L-aspartate + H(+) = beta-alanine + CO2. The protein operates within cofactor biosynthesis; (R)-pantothenate biosynthesis; beta-alanine from L-aspartate: step 1/1. Its function is as follows. Catalyzes the pyruvoyl-dependent decarboxylation of aspartate to produce beta-alanine. In Bacillus cereus (strain B4264), this protein is Aspartate 1-decarboxylase.